Reading from the N-terminus, the 352-residue chain is DNA polymerase IV (352 aa).

The UmuC domain occupies 6 to 186 (IIHIDMDAFY…LPLGKIPGVG (181 aa)). The Mg(2+) site is built by Asp10 and Asp104. Glu105 is an active-site residue.

The protein belongs to the DNA polymerase type-Y family. As to quaternary structure, monomer. Mg(2+) serves as cofactor.

Its subcellular location is the cytoplasm. It carries out the reaction DNA(n) + a 2'-deoxyribonucleoside 5'-triphosphate = DNA(n+1) + diphosphate. Poorly processive, error-prone DNA polymerase involved in untargeted mutagenesis. Copies undamaged DNA at stalled replication forks, which arise in vivo from mismatched or misaligned primer ends. These misaligned primers can be extended by PolIV. Exhibits no 3'-5' exonuclease (proofreading) activity. May be involved in translesional synthesis, in conjunction with the beta clamp from PolIII. The polypeptide is DNA polymerase IV (Neisseria meningitidis serogroup C / serotype 2a (strain ATCC 700532 / DSM 15464 / FAM18)).